We begin with the raw amino-acid sequence, 313 residues long: Endo-beta-N-acetylglucosaminidase H (313 aa).

The segment at residues methionine 1–proline 42 is a signal peptide (or 44). A GH18 domain is found at proline 51–serine 307. Residue glutamate 174 is the Proton donor of the active site.

It belongs to the glycosyl hydrolase 18 family.

It catalyses the reaction an N(4)-(oligosaccharide-(1-&gt;3)-[oligosaccharide-(1-&gt;6)]-beta-D-Man-(1-&gt;4)-beta-D-GlcNAc-(1-&gt;4)-alpha-D-GlcNAc)-L-asparaginyl-[protein] + H2O = an oligosaccharide-(1-&gt;3)-[oligosaccharide-(1-&gt;6)]-beta-D-Man-(1-&gt;4)-D-GlcNAc + N(4)-(N-acetyl-beta-D-glucosaminyl)-L-asparaginyl-[protein]. In terms of biological role, cleaves asparagine-linked oligomannose and hybrid, but not complex, oligosaccharides from glycoproteins. The sequence is that of Endo-beta-N-acetylglucosaminidase H from Streptomyces plicatus.